Reading from the N-terminus, the 378-residue chain is Flap endonuclease 1 (378 aa).

Residues 1–102 (MGIHGLAKLI…GELAKRSERR (102 aa)) are N-domain. Symmetric dimethylarginine; by PRMT5 is present on Arg-19. Asp-34 is a Mg(2+) binding site. Residues Arg-47 and Arg-69 each contribute to the DNA site. Lys-78 carries the N6-acetyllysine modification. Residue Asp-84 coordinates Mg(2+). Arg-98 and Arg-102 each carry symmetric dimethylarginine; by PRMT5. The interval 120–251 (EVEKFTKRLV…KRAVDLIQKH (132 aa)) is I-domain. 4 residues coordinate Mg(2+): Glu-156, Glu-158, Asp-177, and Asp-179. Glu-156 contacts DNA. Phosphoserine; by CDK2 is present on Ser-185. Arg-190 carries the symmetric dimethylarginine; by PRMT5 modification. Ser-195 carries the post-translational modification Phosphoserine. DNA contacts are provided by Gly-229 and Asp-231. Asp-231 is a binding site for Mg(2+). Residues Ser-253, Ser-291, and Ser-333 each carry the phosphoserine modification. The segment at 325–378 (RLSKSRQGSTQGRLDDFFKVTGSLSSAKRKEPEPKGPAKKKAKTGGAGKFRRGK) is disordered. Phosphothreonine is present on Thr-334. An interaction with PCNA region spans residues 334 to 342 (TQGRLDDFF). N6-acetyllysine occurs at positions 352, 373, and 378. Positions 361 to 378 (PAKKKAKTGGAGKFRRGK) are enriched in basic residues.

It belongs to the XPG/RAD2 endonuclease family. FEN1 subfamily. As to quaternary structure, interacts with PCNA. Three molecules of FEN1 bind to one PCNA trimer with each molecule binding to one PCNA monomer. PCNA stimulates the nuclease activity without altering cleavage specificity. The C-terminal domain binds EP300; can bind simultaneously to both PCNA and EP300. Interacts with DDX11; this interaction is direct and increases flap endonuclease activity of FEN1. Interacts with WDR4; regulating its endonuclease activity. Interacts with POLB. Mg(2+) is required as a cofactor. Acetylated by EP300. Acetylation inhibits both endonuclease and exonuclease activity. Acetylation also reduces DNA-binding activity but does not affect interaction with PCNA or EP300. In terms of processing, phosphorylation upon DNA damage induces relocalization to the nuclear plasma. Phosphorylation at Ser-185 by CDK2 occurs during late S-phase and results in dissociation from PCNA. Post-translationally, methylation at Arg-190 by PRMT5 impedes Ser-185 phosphorylation and increases interaction with PCNA.

It is found in the nucleus. The protein localises to the nucleolus. The protein resides in the nucleoplasm. Its subcellular location is the mitochondrion. Functionally, structure-specific nuclease with 5'-flap endonuclease and 5'-3' exonuclease activities involved in DNA replication and repair. During DNA replication, cleaves the 5'-overhanging flap structure that is generated by displacement synthesis when DNA polymerase encounters the 5'-end of a downstream Okazaki fragment. It enters the flap from the 5'-end and then tracks to cleave the flap base, leaving a nick for ligation. Also involved in the long patch base excision repair (LP-BER) pathway, by cleaving within the apurinic/apyrimidinic (AP) site-terminated flap. Acts as a genome stabilization factor that prevents flaps from equilibrating into structures that lead to duplications and deletions. Also possesses 5'-3' exonuclease activity on nicked or gapped double-stranded DNA, and exhibits RNase H activity. Also involved in replication and repair of rDNA and in repairing mitochondrial DNA. This Mus musculus (Mouse) protein is Flap endonuclease 1.